Here is a 124-residue protein sequence, read N- to C-terminus: Small ribosomal subunit protein uS12 (124 aa).

A 3-methylthioaspartic acid modification is found at D89.

The protein belongs to the universal ribosomal protein uS12 family. Part of the 30S ribosomal subunit. Contacts proteins S8 and S17. May interact with IF1 in the 30S initiation complex.

Its function is as follows. With S4 and S5 plays an important role in translational accuracy. In terms of biological role, interacts with and stabilizes bases of the 16S rRNA that are involved in tRNA selection in the A site and with the mRNA backbone. Located at the interface of the 30S and 50S subunits, it traverses the body of the 30S subunit contacting proteins on the other side and probably holding the rRNA structure together. The combined cluster of proteins S8, S12 and S17 appears to hold together the shoulder and platform of the 30S subunit. The protein is Small ribosomal subunit protein uS12 of Leptospira biflexa serovar Patoc (strain Patoc 1 / Ames).